A 199-amino-acid polypeptide reads, in one-letter code: Dephospho-CoA kinase (199 aa).

The region spanning 3–199 is the DPCK domain; it reads TLGVTGGIGS…ELYWAVTGGQ (197 aa). 11-16 contacts ATP; it reads GSGKTT.

Belongs to the CoaE family.

It localises to the cytoplasm. It catalyses the reaction 3'-dephospho-CoA + ATP = ADP + CoA + H(+). Its pathway is cofactor biosynthesis; coenzyme A biosynthesis; CoA from (R)-pantothenate: step 5/5. Catalyzes the phosphorylation of the 3'-hydroxyl group of dephosphocoenzyme A to form coenzyme A. The polypeptide is Dephospho-CoA kinase (Salinibacter ruber (strain DSM 13855 / M31)).